The primary structure comprises 484 residues: tRNA sulfurtransferase (484 aa).

The 105-residue stretch at 63-167 (DVFADRLACI…QDKLYMVERR (105 aa)) folds into the THUMP domain. Residues 185-186 (LI), lysine 267, glycine 289, and glutamine 298 contribute to the ATP site. Cysteine 346 and cysteine 458 are oxidised to a cystine. In terms of domain architecture, Rhodanese spans 406–484 (VASGEIIIDV…GYTNVKVYRP (79 aa)). Cysteine 458 serves as the catalytic Cysteine persulfide intermediate.

The protein belongs to the ThiI family.

The protein localises to the cytoplasm. It catalyses the reaction [ThiI sulfur-carrier protein]-S-sulfanyl-L-cysteine + a uridine in tRNA + 2 reduced [2Fe-2S]-[ferredoxin] + ATP + H(+) = [ThiI sulfur-carrier protein]-L-cysteine + a 4-thiouridine in tRNA + 2 oxidized [2Fe-2S]-[ferredoxin] + AMP + diphosphate. It carries out the reaction [ThiS sulfur-carrier protein]-C-terminal Gly-Gly-AMP + S-sulfanyl-L-cysteinyl-[cysteine desulfurase] + AH2 = [ThiS sulfur-carrier protein]-C-terminal-Gly-aminoethanethioate + L-cysteinyl-[cysteine desulfurase] + A + AMP + 2 H(+). It functions in the pathway cofactor biosynthesis; thiamine diphosphate biosynthesis. In terms of biological role, catalyzes the ATP-dependent transfer of a sulfur to tRNA to produce 4-thiouridine in position 8 of tRNAs, which functions as a near-UV photosensor. Also catalyzes the transfer of sulfur to the sulfur carrier protein ThiS, forming ThiS-thiocarboxylate. This is a step in the synthesis of thiazole, in the thiamine biosynthesis pathway. The sulfur is donated as persulfide by IscS. The protein is tRNA sulfurtransferase of Shewanella frigidimarina (strain NCIMB 400).